A 351-amino-acid polypeptide reads, in one-letter code: Phosphoribosylformylglycinamidine cyclo-ligase (351 aa).

The protein belongs to the AIR synthase family.

Its subcellular location is the cytoplasm. The enzyme catalyses 2-formamido-N(1)-(5-O-phospho-beta-D-ribosyl)acetamidine + ATP = 5-amino-1-(5-phospho-beta-D-ribosyl)imidazole + ADP + phosphate + H(+). It functions in the pathway purine metabolism; IMP biosynthesis via de novo pathway; 5-amino-1-(5-phospho-D-ribosyl)imidazole from N(2)-formyl-N(1)-(5-phospho-D-ribosyl)glycinamide: step 2/2. This Burkholderia ambifaria (strain MC40-6) protein is Phosphoribosylformylglycinamidine cyclo-ligase.